Consider the following 442-residue polypeptide: Protein translocase subunit SecF (442 aa).

Residues 1 to 39 (MASKAKTGRDDEATSAVELTEATESAVARTDGDSTTDTA) form a disordered region. 6 helical membrane passes run 67 to 87 (WFGV…FRGF), 187 to 207 (ITKK…LYIT), 218 to 238 (AITA…LVGF), 243 to 263 (ATVI…VIVF), 301 to 321 (LIGV…LGVG), and 331 to 351 (LIGI…LLVT). Positions 366-442 (VLKRRNSGSP…PTGKRNAGRR (77 aa)) are disordered. The segment covering 402 to 432 (QASSQSAPRAAQGSSKPAPGARPVRPVGTRR) has biased composition (low complexity). Residues 433–442 (PTGKRNAGRR) show a composition bias toward basic residues.

It belongs to the SecD/SecF family. SecF subfamily. As to quaternary structure, forms a complex with SecD. Part of the essential Sec protein translocation apparatus which comprises SecA, SecYEG and auxiliary proteins SecDF. Other proteins may also be involved.

It is found in the cell membrane. Part of the Sec protein translocase complex. Interacts with the SecYEG preprotein conducting channel. SecDF uses the proton motive force (PMF) to complete protein translocation after the ATP-dependent function of SecA. In Mycobacterium tuberculosis (strain CDC 1551 / Oshkosh), this protein is Protein translocase subunit SecF.